Here is a 369-residue protein sequence, read N- to C-terminus: Flagellar P-ring protein (369 aa).

Residues 1–22 (MIKLKQLIAATLLLSTAFGVHA) form the signal peptide.

It belongs to the FlgI family. In terms of assembly, the basal body constitutes a major portion of the flagellar organelle and consists of four rings (L,P,S, and M) mounted on a central rod.

Its subcellular location is the periplasm. The protein resides in the bacterial flagellum basal body. Its function is as follows. Assembles around the rod to form the L-ring and probably protects the motor/basal body from shearing forces during rotation. The sequence is that of Flagellar P-ring protein from Pseudomonas syringae pv. syringae (strain B728a).